A 23-amino-acid chain; its full sequence is Alyteserin-1a (23 aa).

Asparagine 23 carries the asparagine amide modification.

As to expression, expressed by the skin glands.

It localises to the secreted. The protein resides in the target cell membrane. Its function is as follows. Antibacterial peptide with amphipathic alpha-helical structure. Shows selective growth inhibitory activity against the Gram-negative bacteria E.coli (MIC=25 uM) Has a weak hemolytic activity against human erythrocytes (LC(50)&gt;100 uM). Is very weakly active against S.aureus (MIC=200 uM). This chain is Alyteserin-1a, found in Alytes obstetricans (Common midwife toad).